The primary structure comprises 990 residues: Bacteriophage adsorption protein A (990 aa).

The first 27 residues, 1-27 (MKENNLNRVIGWSGLLLTSLLSTSALA), serve as a signal peptide directing secretion. 3 TPR repeats span residues 81–114 (IPLT…HPGD), 612–645 (ANAY…EPNN), and 646–679 (SNTQ…LPDD).

As to quaternary structure, (Microbial infection) Interacts with N4 phage non-contractile sheath protein; this interaction is essential for viral adsorption to the host.

It is found in the cell outer membrane. (Microbial infection) Allows N4 phage attachment by binding to the viral non-contractile sheath protein. This chain is Bacteriophage adsorption protein A (nfrA), found in Escherichia coli (strain K12).